Here is a 99-residue protein sequence, read N- to C-terminus: U1-theraphotoxin-Lsp1c (99 aa).

Residues methionine 1–alanine 23 form the signal peptide. A propeptide spanning residues alanine 24–arginine 50 is cleaved from the precursor. Intrachain disulfides connect cysteine 54-cysteine 67, cysteine 58-cysteine 91, cysteine 72-cysteine 74, and cysteine 85-cysteine 96.

It belongs to the neurotoxin 12 (Hwtx-2) family. 04 (lasiotoxin) subfamily. Expressed by the venom gland.

The protein resides in the secreted. Toxin that causes irreversible contractile paralysis into adult Aedes aegypti resulting in 100% mortality after 24 hours. The chain is U1-theraphotoxin-Lsp1c from Lasiodora sp. (strain IBSP 8539) (Brazilian salmon pink birdeater).